The chain runs to 231 residues: Large ribosomal subunit protein uL1 (231 aa).

The protein belongs to the universal ribosomal protein uL1 family. As to quaternary structure, part of the 50S ribosomal subunit.

Its function is as follows. Binds directly to 23S rRNA. The L1 stalk is quite mobile in the ribosome, and is involved in E site tRNA release. Protein L1 is also a translational repressor protein, it controls the translation of the L11 operon by binding to its mRNA. The chain is Large ribosomal subunit protein uL1 from Nitrosomonas eutropha (strain DSM 101675 / C91 / Nm57).